The primary structure comprises 514 residues: CENP-B homolog protein 2 (514 aa).

In terms of domain architecture, HTH CENPB-type spans 70-145 (QIRRNRQGKY…KKRCLKHGLK (76 aa)). A DDE-1 domain is found at 172-384 (FDPKDIFNMD…FEPSIIYNCF (213 aa)).

It is found in the nucleus. The protein localises to the chromosome. The protein resides in the centromere. In terms of biological role, binds to the central core and core-associated repeat regions of centromeric heterochromatin. This is CENP-B homolog protein 2 (cbh2) from Schizosaccharomyces pombe (strain 972 / ATCC 24843) (Fission yeast).